The sequence spans 2094 residues: Nuclear mitotic apparatus protein 1 (2094 aa).

A head (Globular) region spans residues 1–210; sequence MTLHATRAAT…SPMGDILQTP (210 aa). The residue at position 160 (serine 160) is a Phosphoserine. Threonine 161 carries the phosphothreonine modification. 2 positions are modified to phosphoserine: serine 167 and serine 201. At threonine 209 the chain carries Phosphothreonine. Positions 211–1681 form a coiled coil; it reads QFQMRRLKKQ…ADQQLRDLGK (1471 aa). Serine 269 carries the post-translational modification Phosphoserine. The residue at position 377 (lysine 377) is an N6-acetyllysine. Phosphoserine is present on residues serine 386 and serine 398. Lysine 443 is subject to N6-acetyllysine. 2 disordered regions span residues 617 to 636 and 723 to 759; these read QLQA…TQAQ and LKEQ…AGRK. The span at 627 to 636 shows a compositional bias: polar residues; the sequence is NAQTSVTQAQ. Lysine 878 is modified (N6-acetyllysine). Disordered regions lie at residues 921-1000, 1081-1143, and 1173-1223; these read SLEL…TQER, LVKK…EGLT, and ELGH…SSLI. Residues 935–951 are compositionally biased toward polar residues; it reads ASDQLGEQQGRPFSSTH. 2 stretches are compositionally biased toward basic and acidic residues: residues 956–972 and 983–998; these read AMER…ERLR and QEER…RLTQ. Residue serine 1183 is modified to Phosphoserine. The span at 1194 to 1206 shows a compositional bias: basic and acidic residues; that stretch reads KAQDHSKAEEEWK. Residue serine 1221 is modified to Phosphoserine. The residue at position 1507 (lysine 1507) is an N6-acetyllysine. Position 1583 is a phosphoserine (serine 1583). Residue lysine 1681 forms a Glycyl lysine isopeptide (Lys-Gly) (interchain with G-Cter in SUMO2) linkage. Positions 1681 to 1858 are membrane-binding domain 1; that stretch reads KFQVATDALK…NSALLSLPGY (178 aa). Residues 1682 to 2094 are tail (Globular); the sequence is FQVATDALKS…TPRAKGKVKH (413 aa). Phosphoserine is present on residues serine 1703, serine 1706, and serine 1710. The disordered stretch occupies residues 1718 to 1743; that stretch reads SVASKLPRTQPDGTSVPGEPASPISQ. The Tankyrase-binding domain signature appears at 1724–1730; that stretch reads PRTQPDG. 2 positions are modified to phosphoserine: serine 1739 and serine 1742. Lysine 1748 is covalently cross-linked (Glycyl lysine isopeptide (Lys-Gly) (interchain with G-Cter in SUMO1); alternate). Residue lysine 1748 forms a Glycyl lysine isopeptide (Lys-Gly) (interchain with G-Cter in SUMO2); alternate linkage. A Phosphoserine modification is found at serine 1751. Phosphoserine; by PLK1 is present on serine 1754. Tyrosine 1756 is modified (phosphotyrosine). Residue threonine 1758 is modified to Phosphothreonine. The segment at 1760 to 1795 is disordered; that stretch reads TPARGQAPLETSLDSLGDAFPDSGRKTRSARRRTTQ. The interval 1770–1792 is 4.1-binding domain; it reads TSLDSLGDAFPDSGRKTRSARRR. At serine 1771 the chain carries Phosphoserine; by PLK1. Phosphoserine occurs at positions 1774 and 1782. Threonine 1786 carries the phosphothreonine modification. A Glycyl lysine isopeptide (Lys-Gly) (interchain with G-Cter in SUMO2) cross-link involves residue lysine 1804. Disordered regions lie at residues 1807-1883 and 1937-2094; these read LEEP…GRNS and EMKT…KVKH. Phosphoserine is present on residues serine 1812 and serine 1815. The span at 1812–1839 shows a compositional bias: polar residues; that stretch reads SANSSFYSTQSAPASQANLRATSSTQSL. Serine 1816 carries the phosphoserine; by PLK1 modification. The residue at position 1818 (tyrosine 1818) is a Phosphotyrosine. Serine 1822 bears the Phosphoserine mark. A Phosphoserine; alternate modification is found at serine 1826. The O-linked (GlcNAc) serine; alternate glycan is linked to serine 1826. Phosphoserine is present on residues serine 1844 and serine 1869. Positions 1864–1967 are tubulin-binding domain; that stretch reads SSARRSQARM…AEGVGITTRQ (104 aa). Residues 1874-1908 form a GPSM2-binding domain region; sequence SSGAPQGRNSFYMGTCQDEPEQLDDWNRIAELQQR. A compositionally biased stretch (basic and acidic residues) spans 1937-1948; sequence EMKTGDPRETLR. A Phosphoserine modification is found at serine 1951. The membrane-binding domain 2 stretch occupies residues 1963–2042; the sequence is ITTRQQRKRV…SILNTPKKLG (80 aa). The short motif at 1966 to 1971 is the Nuclear localization signal element; sequence RQQRKR. Serine 1973 and serine 1974 each carry phosphoserine. A Phosphothreonine modification is found at threonine 1982. The residue at position 1985 (serine 1985) is a Phosphoserine. The residue at position 1997 (threonine 1997) is a Phosphothreonine; by CDK1. Residues 1997 to 2006 are compositionally biased toward basic and acidic residues; sequence TPRDRHEGRK. Serine 2029 carries the phosphoserine modification. A Phosphothreonine modification is found at threonine 2037. Serine 2044 and serine 2059 each carry phosphoserine. Serine 2069 bears the Phosphoserine; by CDK1 mark. Residues 2073 to 2085 are compositionally biased toward low complexity; it reads ATTTTGTATVATT. Residue threonine 2085 is modified to Phosphothreonine; by CDK1.

Homodimer. Also forms multiarm oligomers by association of C-terminal tail domains, oligomers may further assemble to form a hexagonal nuclear lattice-like network. Associates with the dynein-dynactin complex; this association promotes the transport and accumulation of NUMA1 at the mitotic spindle poles that is inhibited by the BRISC complex in a PLK1-dependent manner. Part of a spindle orientation complex at least composed of GNAI1, GPSM2 and NUMA1. Interacts (via C-terminus) with microtubules (MTs); this interaction is direct and promotes both MT bundle formation and stability in a dynein-dynactin complex- and CDK1-independent manner. Interacts with EPB41 and EPB41L2; these interactions are negatively regulated by CDK1 during metaphase and are important for anaphase-specific localization of NUMA1 in symmetrically dividing cells. Interacts (via C-terminus) with GPSM2 (via TPR repeats); this interaction is direct, prevented by competitive binding of INSC, is inhibited in a PLK1-dependent manner, blocks the association of NUMA1 with MTs and inhibits NUMA1-induced MT bundle formation, prevents the association of NUMA1 with SPAG5, induces mitotic spindle pole localization of GPSM2, both metaphase cell cortex localization of NUMA1 and mitotic spindle organization. Does not interact with GPSM2 during anaphase. Interacts (via C-terminus) with the nuclear importin alpha/importin beta receptor; this interaction is inhibited by RanGTP. Interacts (via C-terminus) with KPNB1; this interaction is inhibited by RanGTP and the BRISC complex. Interacts with ABRAXAS2 and the BRISC complex; these interactions regulate mitotic spindle assembly. Interacts (via N-terminal end of the coiled-coil domain) with RAE1; this interaction promotes mitotic spindle formation. Interacts (via C-terminus) with SPAG5 (via C-terminus); this interaction promotes the recruitment of SPAG5 to the MTs at spindle poles in a dynein-dynactin-dependent manner and regulates mitotic spindle organization and proper chromosome alignment during mitosis. Interacts with TNKS; this interaction occurs at the onset of mitosis. Interacts with TNKS2. Interacts with tubulin. Interacts with KHDC3 (via C-terminus). In terms of processing, phosphorylation and dephosphorylation on Thr-2037 regulates the extent of cortical NUMA1 and the dynein-dynactin complex localization during mitotic metaphase and anaphase. In metaphase, phosphorylation on Thr-2037 occurs in a kinase CDK1-dependent manner; this phosphorylation maintains low levels of cortical dynein-dynactin complex at metaphase, and hence proper spindle positioning. In anaphase, dephosphorylated on Thr-2037 by phosphatase PPP2CA; this dephosphorylation stimulates its membrane association and with the dynein-dynactin complex its enrichment at the cell cortex, and hence robust spindle elongation. Probably also phosphorylated on Thr-1997 and Ser-2069 by CDK1; these phosphorylations may regulate its cell cortex recruitment during metaphase and anaphase. Phosphorylated on Ser-1751, Ser-1754, Ser-1771 and Ser-1816 by PLK1; these phosphorylations induce cortical dynein-dynactin complex dissociation from the NUMA1-GPSM2 complex and negatively regulates cortical dynein-dynactin complex localization. Post-translationally, ADP-ribosylated by TNKS at the onset of mitosis; ADP-ribosylation is not required for its localization to spindle poles. O-glycosylated during cytokinesis at sites identical or close to phosphorylation sites, this interferes with the phosphorylation status. In terms of processing, ubiquitinated with 'Lys-63'-linked polyubiquitin chains. Deubiquitination by the BRISC complex is important for the incorporation of NUMA1 into mitotic spindle poles and normal spindle pole function, probably by modulating interactions between NUMA1, dynein-dynactin complex and importin-beta. As to expression, expressed in testis, speen, liver, lung, spinal cord and brain. Expressed in Purkinje neurons (at protein level).

The protein resides in the nucleus. The protein localises to the nucleoplasm. It localises to the nucleus matrix. It is found in the chromosome. Its subcellular location is the cytoplasm. The protein resides in the cytoskeleton. The protein localises to the microtubule organizing center. It localises to the centrosome. It is found in the spindle pole. Its subcellular location is the cell cortex. The protein resides in the cell membrane. The protein localises to the lateral cell membrane. Functionally, microtubule (MT)-binding protein that plays a role in the formation and maintenance of the spindle poles and the alignement and the segregation of chromosomes during mitotic cell division. Functions to tether the minus ends of MTs at the spindle poles, which is critical for the establishment and maintenance of the spindle poles. Plays a role in the establishment of the mitotic spindle orientation during metaphase and elongation during anaphase in a dynein-dynactin-dependent manner. In metaphase, part of a ternary complex composed of GPSM2 and G(i) alpha proteins, that regulates the recruitment and anchorage of the dynein-dynactin complex in the mitotic cell cortex regions situated above the two spindle poles, and hence regulates the correct oritentation of the mitotic spindle. During anaphase, mediates the recruitment and accumulation of the dynein-dynactin complex at the cell membrane of the polar cortical region through direct association with phosphatidylinositol 4,5-bisphosphate (PI(4,5)P2), and hence participates in the regulation of the spindle elongation and chromosome segregation. Also binds to other polyanionic phosphoinositides, such as phosphatidylinositol 3-phosphate (PIP), lysophosphatidic acid (LPA) and phosphatidylinositol triphosphate (PIP3), in vitro. Also required for proper orientation of the mitotic spindle during asymmetric cell divisions. Plays a role in mitotic MT aster assembly. Involved in anastral spindle assembly. Positively regulates TNKS protein localization to spindle poles in mitosis. Highly abundant component of the nuclear matrix where it may serve a non-mitotic structural role, occupies the majority of the nuclear volume. Required for epidermal differentiation and hair follicle morphogenesis. The protein is Nuclear mitotic apparatus protein 1 of Mus musculus (Mouse).